The following is a 568-amino-acid chain: Natural resistance-associated macrophage protein 2 (568 aa).

Residues 1–40 are disordered; that stretch reads MVLGPEQKMSDDSVSGDHGESASLGNINPAYSNPSLSQSP. The Cytoplasmic segment spans residues 1–69; sequence MVLGPEQKMS…EEYSCFSFRK (69 aa). The span at 8–20 shows a compositional bias: basic and acidic residues; the sequence is KMSDDSVSGDHGE. The span at 23–40 shows a compositional bias: polar residues; sequence SLGNINPAYSNPSLSQSP. A helical transmembrane segment spans residues 70 to 90; that stretch reads LWAFTGPGFLMSIAYLDPGNI. At 91 to 96 the chain is on the extracellular side; sequence ESDLQS. A helical membrane pass occupies residues 97–117; that stretch reads GAVAGFKLLWILLLATLVGLL. The Cytoplasmic portion of the chain corresponds to 118–154; the sequence is LQRLAARLGVVTGLHLAEVCHRQYPKVPRVILWLMVE. A helical membrane pass occupies residues 155–175; that stretch reads LAIIGSDMQEVIGSAIAINLL. At 176 to 179 the chain is on the extracellular side; the sequence is SVGR. The helical transmembrane segment at 180–200 threads the bilayer; sequence IPLWGGVLITIADTFVFLFLD. Over 201 to 208 the chain is Cytoplasmic; sequence KYGLRKLE. Residues 209–229 form a helical membrane-spanning segment; that stretch reads AFFGFLITIMALTFGYEYVTV. At 230-255 the chain is on the extracellular side; sequence KPSQSQVLKGMFVPSCSGCRTPQIEQ. Residues 256 to 276 form a helical membrane-spanning segment; sequence AVGIVGAVIMPHNMYLHSALV. The Cytoplasmic segment spans residues 277-301; it reads KSRQVNRNNKQEVREANKYFFIESC. A helical membrane pass occupies residues 302–322; sequence IALFVSFIINVFVVSVFAEAF. The Extracellular segment spans residues 323–360; it reads FGKTNEQVVEVCTNTSSPHAGLFPKDNSTLAVDIYKGG. 2 N-linked (GlcNAc...) asparagine glycosylation sites follow: Asn336 and Asn349. A helical membrane pass occupies residues 361–381; sequence VVLGCYFGPAALYIWAVGILA. Topologically, residues 382 to 408 are cytoplasmic; sequence AGQSSTMTGTYSGQFVMEGFLNLKWSR. A helical membrane pass occupies residues 409–429; the sequence is FARVVLTRSIAIIPTLLVAVF. Over 430–440 the chain is Extracellular; that stretch reads QDVEHLTGMND. A helical transmembrane segment spans residues 441 to 461; that stretch reads FLNVLQSLQLPFALIPILTFT. At 462–482 the chain is on the cytoplasmic side; it reads SLRPVMSDFANGLGWRIAGGI. The helical transmembrane segment at 483–503 threads the bilayer; it reads LVLIICSINMYFVVVYVRDLG. Topologically, residues 504–506 are extracellular; that stretch reads HVA. The helical transmembrane segment at 507–527 threads the bilayer; sequence LYVVAAVVSVAYLGFVFYLGW. The Cytoplasmic portion of the chain corresponds to 528 to 568; sequence QCLIALGMSFLDCGHTCHLGLTAQPELYLLNTMDADSLVSR. Residues 555-559 form a required for early endosome targeting region; that stretch reads YLLNT. Residues Ser564 and Ser567 each carry the phosphoserine modification.

Belongs to the NRAMP family. In terms of assembly, forms a complex with NDFIP1 and NEDD4L, in cortical neurons, in response to iron and cobalt exposure; this interaction leads to SLC11A2 ubiquitination by NEDD4L and proteasome-dependent degradation. Interacts with NDFIP1, NDFIP2 and WWP2; this interaction leads to SLC11A2 ubiquitination by WWP2 and subsequent proteasome-dependent degradation. Interacts with COX2 and TOM6 at the outer mitochondrion membrane. Interacts with ARRDC1; this interaction regulates the incorporation of SLC11A2 into extracellular vesicles through an ubiquitination-dependent mechanism. Interacts with ARRDC4; controls the incorporation of SLC11A2 into extracellular vesicles through an ubiquitination-dependent mechanism. Post-translationally, ubiquitinated by WWP2. N-glycosylated. As to expression, ubiquitously expressed. Expressed in erythroid progenitors.

The protein localises to the early endosome membrane. It localises to the apical cell membrane. The protein resides in the late endosome membrane. It is found in the lysosome membrane. Its subcellular location is the cell membrane. The protein localises to the extracellular vesicle membrane. It localises to the mitochondrion outer membrane. The protein resides in the golgi apparatus. It is found in the trans-Golgi network membrane. Its subcellular location is the recycling endosome membrane. It carries out the reaction Fe(2+)(in) + H(+)(in) = Fe(2+)(out) + H(+)(out). The catalysed reaction is Co(2+)(out) + H(+)(out) = Co(2+)(in) + H(+)(in). The enzyme catalyses Cd(2+)(out) + H(+)(out) = Cd(2+)(in) + H(+)(in). It catalyses the reaction Mn(2+)(in) + H(+)(in) = Mn(2+)(out) + H(+)(out). It carries out the reaction Zn(2+)(out) + H(+)(out) = Zn(2+)(in) + H(+)(in). The catalysed reaction is Ni(2+)(out) + H(+)(out) = Ni(2+)(in) + H(+)(in). The enzyme catalyses H(+)(in) = H(+)(out). It catalyses the reaction Fe(2+)(in) = Fe(2+)(out). Proton-coupled metal ion symporter operating with a proton to metal ion stoichiometry of 1:1. Selectively transports various divalent metal cations, in decreasing affinity: Cd(2+) &gt; Fe(2+) &gt; Co(2+), Mn(2+) &gt;&gt; Zn(2+), Ni(2+), VO(2+). Essential for maintenance of iron homeostasis by modulating intestinal absorption of dietary Fe(2+) and TF-associated endosomal Fe(2+) transport in erythroid precursors and other cells. Enables Fe(2+) and Mn(2+) ion entry into mitochondria, and is thus expected to promote mitochondrial heme synthesis, iron-sulfur cluster biogenesis and antioxidant defense. Can mediate uncoupled fluxes of either protons or metal ions. This Homo sapiens (Human) protein is Natural resistance-associated macrophage protein 2 (SLC11A2).